The primary structure comprises 218 residues: ATP-dependent Clp protease proteolytic subunit 2 (218 aa).

Ser114 acts as the Nucleophile in catalysis. His139 is an active-site residue.

The protein belongs to the peptidase S14 family. Fourteen ClpP subunits assemble into 2 heptameric rings which stack back to back to give a disk-like structure with a central cavity, resembling the structure of eukaryotic proteasomes.

The protein localises to the cytoplasm. The catalysed reaction is Hydrolysis of proteins to small peptides in the presence of ATP and magnesium. alpha-casein is the usual test substrate. In the absence of ATP, only oligopeptides shorter than five residues are hydrolyzed (such as succinyl-Leu-Tyr-|-NHMec, and Leu-Tyr-Leu-|-Tyr-Trp, in which cleavage of the -Tyr-|-Leu- and -Tyr-|-Trp bonds also occurs).. Cleaves peptides in various proteins in a process that requires ATP hydrolysis. Has a chymotrypsin-like activity. Plays a major role in the degradation of misfolded proteins. Probably partially responsible for degradation of ECF sigma factor SigR prime. The chain is ATP-dependent Clp protease proteolytic subunit 2 from Streptomyces coelicolor (strain ATCC BAA-471 / A3(2) / M145).